We begin with the raw amino-acid sequence, 104 residues long: SPbeta prophage-derived stress response protein SCP1 (104 aa).

The protein resides in the cytoplasm. This chain is SPbeta prophage-derived stress response protein SCP1 (yorD), found in Bacillus subtilis (strain 168).